Reading from the N-terminus, the 242-residue chain is UPF0246 protein SP70585_1589 (242 aa).

The protein belongs to the UPF0246 family.

This chain is UPF0246 protein SP70585_1589, found in Streptococcus pneumoniae (strain 70585).